Reading from the N-terminus, the 770-residue chain is Proton-coupled zinc antiporter SLC30A5 (770 aa).

Residues 1–29 are Cytoplasmic-facing; it reads MEEKYSSQALAGGGVLGPVDVPSARLTRY. A helical transmembrane segment spans residues 30–50; the sequence is IVLLCFAKFLKAVGLFESYDL. The Lumenal portion of the chain corresponds to 51-53; sequence LKA. A helical membrane pass occupies residues 54–74; the sequence is VHLVQFIFIVKLGSAFFMVLF. The Cytoplasmic portion of the chain corresponds to 75 to 95; that stretch reads QKPFSSGKVVTKHQWIKIFKH. A helical membrane pass occupies residues 96–116; the sequence is AVVGCIISLLWFFGLTLCGPL. A topological domain (lumenal) is located at residue R117. Residues 118–138 form a helical membrane-spanning segment; that stretch reads TLLLFEHSDVVVLSLLSVLFT. The Cytoplasmic portion of the chain corresponds to 139–149; that stretch reads SSGGGPAKTRG. A helical transmembrane segment spans residues 150–170; it reads AAFFIIAVICLLLFDNDDLMA. Residues 171–190 are Lumenal-facing; sequence KIAEHPEGHHDSALTHVLYT. Residues 191 to 211 form a helical membrane-spanning segment; that stretch reads VIAFLGVADHKGGVLLLVLAL. Over 212–235 the chain is Cytoplasmic; that stretch reads CCKVGFHMASRKLSVDVGGAKRLQ. Residues 236–256 form a helical membrane-spanning segment; the sequence is ALSHLVSVLLLCPWVIVLSLT. Topologically, residues 257–264 are lumenal; the sequence is TESKVESW. The helical transmembrane segment at 265–285 threads the bilayer; it reads SSLIMPFITVIFFVVILDFYV. Topologically, residues 286-300 are cytoplasmic; sequence ESICSVKMESSKCAR. Residues 301 to 321 traverse the membrane as a helical segment; sequence YGSFLIFISALLFGNFWTHPI. The Lumenal portion of the chain corresponds to 322–339; it reads TDQLRAMNKPAHHESTEH. The helical transmembrane segment at 340-360 threads the bilayer; sequence VLSGGVVVSAVFFILSANILS. At 361–415 the chain is on the cytoplasmic side; the sequence is SPSRKGQKGTLIGYSPEGTPLYNFMGDAIQQSSQSLPRFIKESLKQILEEYDSRQ. A helical membrane pass occupies residues 416 to 436; sequence IFYFLCLNLAFTFVELFYGVW. Residues 437–445 are Lumenal-facing; that stretch reads TNSLGLISD. The helical transmembrane segment at 446–466 threads the bilayer; sequence GFHMLFDCSALVMGLFAALMT. Zn(2+) is bound by residues H448 and D452. Residues 467–480 lie on the Cytoplasmic side of the membrane; sequence RWKATRIFSYGYGR. A helical membrane pass occupies residues 481-501; the sequence is VEILSGFINGLFLMVIAFFVF. Residues 502-517 are Lumenal-facing; the sequence is MESVARLVDPPDIDTN. Residues 518–538 form a helical membrane-spanning segment; sequence MLTPVSVGGLIVNLVGICAFS. Positions 539–579 are his-rich loop; required for zinc transport; the sequence is HAHSHGASRGGCHSHEHSHSYHGHSHSHGHGHSHNDHGHSH. The Cytoplasmic segment spans residues 539-597; the sequence is HAHSHGASRGGCHSHEHSHSYHGHSHSHGHGHSHNDHGHSHGHSHVSSGGGMNTNMRGV. Positions 548–586 are disordered; sequence GGCHSHEHSHSYHGHSHSHGHGHSHNDHGHSHGHSHVSS. Basic residues predominate over residues 558 to 570; it reads SYHGHSHSHGHGH. Residues 598-618 traverse the membrane as a helical segment; sequence FLHVLADTLGSVGVIVSTTFI. H600 and D604 together coordinate Zn(2+). Residues 619–622 are Lumenal-facing; the sequence is QQFG. The helical transmembrane segment at 623–643 threads the bilayer; the sequence is WLIADPLCSLFIATLIFLSVI. At 644-770 the chain is on the cytoplasmic side; it reads PLLKDACQVL…KYYKDGTYIM (127 aa).

This sequence belongs to the cation diffusion facilitator (CDF) transporter (TC 2.A.4) family. SLC30A subfamily. Heterodimer with SLC30A6/ZNT6; form a functional zinc ion transmembrane transporter.

The protein resides in the golgi apparatus. It localises to the golgi stack membrane. Its subcellular location is the cytoplasmic vesicle. It is found in the COPII-coated vesicle membrane. The protein localises to the secretory vesicle membrane. The protein resides in the trans-Golgi network membrane. The catalysed reaction is Zn(2+)(in) + 2 H(+)(out) = Zn(2+)(out) + 2 H(+)(in). In terms of biological role, together with SLC30A6 forms a functional proton-coupled zinc ion antiporter mediating zinc entry into the lumen of organelles along the secretory pathway. By contributing to zinc ion homeostasis within the early secretory pathway, regulates the activation and folding of enzymes like alkaline phosphatases and enzymes involved in phosphatidylinositol glycan anchor biosynthesis. This Gallus gallus (Chicken) protein is Proton-coupled zinc antiporter SLC30A5.